Reading from the N-terminus, the 282-residue chain is Putative phosphoenolpyruvate synthase regulatory protein (282 aa).

162 to 169 lines the ADP pocket; the sequence is GVSRSGKT.

It belongs to the pyruvate, phosphate/water dikinase regulatory protein family. PSRP subfamily.

The enzyme catalyses [pyruvate, water dikinase] + ADP = [pyruvate, water dikinase]-phosphate + AMP + H(+). It catalyses the reaction [pyruvate, water dikinase]-phosphate + phosphate + H(+) = [pyruvate, water dikinase] + diphosphate. In terms of biological role, bifunctional serine/threonine kinase and phosphorylase involved in the regulation of the phosphoenolpyruvate synthase (PEPS) by catalyzing its phosphorylation/dephosphorylation. The sequence is that of Putative phosphoenolpyruvate synthase regulatory protein from Psychrobacter arcticus (strain DSM 17307 / VKM B-2377 / 273-4).